A 523-amino-acid polypeptide reads, in one-letter code: GMP synthase [glutamine-hydrolyzing] (523 aa).

The 198-residue stretch at 8–205 (KILILDFGSQ…VVNICGCTTN (198 aa)) folds into the Glutamine amidotransferase type-1 domain. The active-site Nucleophile is Cys85. Catalysis depends on residues His179 and Glu181. The 193-residue stretch at 206–398 (WTPENIIEDA…LGLPAEMLNR (193 aa)) folds into the GMPS ATP-PPase domain. 233–239 (SGGVDSS) contacts ATP.

In terms of assembly, homodimer.

The enzyme catalyses XMP + L-glutamine + ATP + H2O = GMP + L-glutamate + AMP + diphosphate + 2 H(+). It participates in purine metabolism; GMP biosynthesis; GMP from XMP (L-Gln route): step 1/1. Functionally, catalyzes the synthesis of GMP from XMP. The polypeptide is GMP synthase [glutamine-hydrolyzing] (Mannheimia succiniciproducens (strain KCTC 0769BP / MBEL55E)).